Consider the following 636-residue polypeptide: Threonine--tRNA ligase (636 aa).

A TGS domain is found at 1 to 63; the sequence is MNEINVTLPD…ADGARVEIIT (63 aa). The tract at residues 243-534 is catalytic; it reads DHRKLGRELD…LIEHFAGNFP (292 aa). Zn(2+)-binding residues include cysteine 335, histidine 386, and histidine 511.

The protein belongs to the class-II aminoacyl-tRNA synthetase family. In terms of assembly, homodimer. Zn(2+) serves as cofactor.

Its subcellular location is the cytoplasm. It catalyses the reaction tRNA(Thr) + L-threonine + ATP = L-threonyl-tRNA(Thr) + AMP + diphosphate + H(+). In terms of biological role, catalyzes the attachment of threonine to tRNA(Thr) in a two-step reaction: L-threonine is first activated by ATP to form Thr-AMP and then transferred to the acceptor end of tRNA(Thr). Also edits incorrectly charged L-seryl-tRNA(Thr). The chain is Threonine--tRNA ligase from Citrifermentans bemidjiense (strain ATCC BAA-1014 / DSM 16622 / JCM 12645 / Bem) (Geobacter bemidjiensis).